Here is a 330-residue protein sequence, read N- to C-terminus: Biotin synthase (330 aa).

Positions 55–282 (NAVQRSTLLS…TAYVRLSAGR (228 aa)) constitute a Radical SAM core domain. [4Fe-4S] cluster is bound by residues C70, C74, and C77. C114, C145, C205, and R277 together coordinate [2Fe-2S] cluster.

This sequence belongs to the radical SAM superfamily. Biotin synthase family. In terms of assembly, homodimer. [4Fe-4S] cluster serves as cofactor. It depends on [2Fe-2S] cluster as a cofactor.

It catalyses the reaction (4R,5S)-dethiobiotin + (sulfur carrier)-SH + 2 reduced [2Fe-2S]-[ferredoxin] + 2 S-adenosyl-L-methionine = (sulfur carrier)-H + biotin + 2 5'-deoxyadenosine + 2 L-methionine + 2 oxidized [2Fe-2S]-[ferredoxin]. It participates in cofactor biosynthesis; biotin biosynthesis; biotin from 7,8-diaminononanoate: step 2/2. Functionally, catalyzes the conversion of dethiobiotin (DTB) to biotin by the insertion of a sulfur atom into dethiobiotin via a radical-based mechanism. This is Biotin synthase from Methylibium petroleiphilum (strain ATCC BAA-1232 / LMG 22953 / PM1).